Consider the following 500-residue polypeptide: Zinc finger protein PLAG1 (500 aa).

Positions 1–30 are disordered; it reads MATVIPGDLSEVRDTQKVPSGKRKRGETKP. An interaction with KPNA2 region spans residues 2–84; the sequence is ATVIPGDLSE…SKYKLQRHMA (83 aa). Positions 22-25 match the Nuclear localization signal motif; it reads KRKR. C2H2-type zinc fingers lie at residues 34 to 56, 62 to 86, 92 to 114, 121 to 143, 150 to 172, 185 to 207, and 213 to 236; these read FPCQ…SYSH, YKCI…MATH, HKCN…LHTH, FKCE…LALH, LTCK…LKSH, HQCE…MVVH, and FLCQ…KKSH. The segment at 41–242 is decreased nuclear import with localization in the nucleus but also in the cytoplasm; the sequence is KAFNSVEKLK…KKSHNQELLK (202 aa). The segment at 243–384 is repression domain; contains 3 sumoylation motifs and massively decrease transcription activity; that stretch reads VKTEPVDFLD…QASSSSKLGL (142 aa). The segment at 243 to 500 is activates transcription; Inhibition of nuclear import due to lack of NLS and KPNA2 interaction; the sequence is VKTEPVDFLD…TLPRFHQAFQ (258 aa). Residues K244 and K263 each participate in a glycyl lysine isopeptide (Lys-Gly) (interchain with G-Cter in SUMO) cross-link. The tract at residues 365–388 is disordered; sequence GGVPSSSQDSQASSSSKLGLDPQI. The segment covering 369-380 has biased composition (low complexity); it reads SSSQDSQASSSS. The segment at 385–500 is massively activates transcription; the sequence is DPQIGSLDDG…TLPRFHQAFQ (116 aa).

It belongs to the krueppel C2H2-type zinc-finger protein family. In terms of assembly, interacts with KPNA2, which escorts protein to the nucleus via interaction with nuclear localization signal. Interacts with E3 SUMO-protein ligase PIAS1, PIAS2 and PIAS4. In terms of processing, sumoylated with SUMO1; which inhibits transcriptional activity, but does not affect nuclear localization. Blockers of sumoylation pathway such as SENP3 and inactive UBE2I increases transcriptional capacity. Sumoylation is increased in the presence of PIAS1. Acetylated by lysine acetyltransferase EP300; which activates transcriptional capacity. Lysine residues that are sumoylated also seem to be target for acetylation. As to expression, expressed in fetal tissues such as lung, liver and kidney. Not detected or weak detection in normal adult tissues, but highly expressed in salivary gland with benign or malignant pleiomorphic adenomas with or without 8q12 aberrations, with preferential occurrence in benign tumors.

It is found in the nucleus. Transcription factor whose activation results in up-regulation of target genes, such as IGFII, leading to uncontrolled cell proliferation: when overexpressed in cultured cells, higher proliferation rate and transformation are observed. Other target genes such as CRLF1, CRABP2, CRIP2, PIGF are strongly induced in cells with PLAG1 induction. Proto-oncogene whose ectopic expression can trigger the development of pleomorphic adenomas of the salivary gland and lipoblastomas. Overexpression is associated with up-regulation of IGFII, is frequently observed in hepatoblastoma, common primary liver tumor in childhood. Cooperates with CBFB-MYH11, a fusion gene important for myeloid leukemia. In Homo sapiens (Human), this protein is Zinc finger protein PLAG1 (PLAG1).